The primary structure comprises 200 residues: NADH-quinone oxidoreductase subunit C (200 aa).

Belongs to the complex I 30 kDa subunit family. NDH-1 is composed of 14 different subunits. Subunits NuoB, C, D, E, F, and G constitute the peripheral sector of the complex.

Its subcellular location is the cell inner membrane. The enzyme catalyses a quinone + NADH + 5 H(+)(in) = a quinol + NAD(+) + 4 H(+)(out). Functionally, NDH-1 shuttles electrons from NADH, via FMN and iron-sulfur (Fe-S) centers, to quinones in the respiratory chain. The immediate electron acceptor for the enzyme in this species is believed to be ubiquinone. Couples the redox reaction to proton translocation (for every two electrons transferred, four hydrogen ions are translocated across the cytoplasmic membrane), and thus conserves the redox energy in a proton gradient. The protein is NADH-quinone oxidoreductase subunit C of Rhizobium rhizogenes (strain K84 / ATCC BAA-868) (Agrobacterium radiobacter).